Reading from the N-terminus, the 449-residue chain is Clusterin (449 aa).

Residues 1–21 form the signal peptide; sequence MKTLLLLVGLLLTLENGQVLG. The short motif at 77-80 is the Nuclear localization signal element; sequence KKKK. Residues Asn-85 and Asn-102 are each glycosylated (N-linked (GlcNAc...) asparagine). 5 disulfide bridges follow: Cys-101–Cys-313, Cys-112–Cys-305, Cys-115–Cys-302, Cys-120–Cys-295, and Cys-128–Cys-285. At Ser-132 the chain carries Phosphoserine. N-linked (GlcNAc...) asparagine glycosylation is found at Asn-144, Asn-291, Asn-328, Asn-354, and Asn-374. The residue at position 396 (Ser-396) is a Phosphoserine. The Nuclear localization signal signature appears at 443 to 447; the sequence is RQKNR.

It belongs to the clusterin family. Antiparallel disulfide-linked heterodimer of an alpha chain and a beta chain. Self-associates and forms higher oligomers. Interacts with a broad range of misfolded proteins, including APP, APOC2 and LYZ. Slightly acidic pH promotes interaction with misfolded proteins. Forms high-molecular weight oligomers upon interaction with misfolded proteins. Interacts with APOA1, LRP2, CLUAP1 and PON1. Interacts with the complement membrane attack complex. Interacts (via alpha chain) with XRCC6. Interacts with SYVN1, COMMD1, BTRC, CUL1 and with ubiquitin and SCF (SKP1-CUL1-F-box protein) E3 ubiquitin-protein ligase complexes. Interacts (via alpha chain) with BAX in stressed cells, where BAX undergoes a conformation change leading to association with the mitochondrial membrane. Does not interact with BAX in unstressed cells. Found in a complex with LTF, CLU, EPPIN and SEMG1. Interacts (immaturely glycosylated pre-secreted form) with HSPA5; this interaction promotes CLU stability and facilitates stress-induced CLU retrotranslocation from the secretory pathway to the mitochondria, thereby reducing stress-induced apoptosis by stabilizing mitochondrial membrane integrity. Interacts with BCL2L1; this interaction releases and activates BAX and promotes cell death. Interacts with TGFBR2 and ACVR1. Interacts (secreted form) with STMN3; this interaction may act as an important modulator during neuronal differentiation. Interacts with VLDLR and LRP8. In terms of processing, proteolytically cleaved on its way through the secretory system, probably within the Golgi lumen. Proteolytic cleavage is not necessary for its chaperone activity. All non-secreted forms are not proteolytically cleaved. Chaperone activity of uncleaved forms is dependent on a non-reducing environment. Polyubiquitinated, leading to proteasomal degradation. Under cellular stress, the intracellular level of cleaved form is reduced due to proteasomal degradation. Post-translationally, heavily N-glycosylated. About 30% of the protein mass is comprised of complex N-linked carbohydrate. Endoplasmic reticulum (ER) stress induces changes in glycosylation status and increases level of hypoglycosylated forms. Core carbohydrates are essential for chaperone activity. Non-secreted forms are hypoglycosylated or unglycosylated.

It localises to the secreted. Its subcellular location is the nucleus. The protein localises to the cytoplasm. The protein resides in the mitochondrion membrane. It is found in the cytosol. It localises to the microsome. Its subcellular location is the endoplasmic reticulum. The protein localises to the mitochondrion. The protein resides in the perinuclear region. It is found in the cytoplasmic vesicle. It localises to the secretory vesicle. Its subcellular location is the chromaffin granule. Its function is as follows. Functions as extracellular chaperone that prevents aggregation of non native proteins. Prevents stress-induced aggregation of blood plasma proteins. Inhibits formation of amyloid fibrils by APP, APOC2, B2M, CALCA, CSN3, SNCA and aggregation-prone LYZ variants (in vitro). Does not require ATP. Maintains partially unfolded proteins in a state appropriate for subsequent refolding by other chaperones, such as HSPA8/HSC70. Does not refold proteins by itself. Binding to cell surface receptors triggers internalization of the chaperone-client complex and subsequent lysosomal or proteasomal degradation. When secreted, protects cells against apoptosis and against cytolysis by complement: inhibits assembly of the complement membrane attack complex (MAC) by preventing polymerization of C9 pore component of the MAC complex. Intracellular forms interact with ubiquitin and SCF (SKP1-CUL1-F-box protein) E3 ubiquitin-protein ligase complexes and promote the ubiquitination and subsequent proteasomal degradation of target proteins. Promotes proteasomal degradation of COMMD1 and IKBKB. Modulates NF-kappa-B transcriptional activity. Following stress, promotes apoptosis. Inhibits apoptosis when associated with the mitochondrial membrane by interference with BAX-dependent release of cytochrome c into the cytoplasm. Plays a role in the regulation of cell proliferation. An intracellular form suppresses stress-induced apoptosis by stabilizing mitochondrial membrane integrity through interaction with HSPA5. Secreted form does not affect caspase or BAX-mediated intrinsic apoptosis and TNF-induced NF-kappa-B-activity. Secreted form act as an important modulator during neuronal differentiation through interaction with STMN3. Plays a role in the clearance of immune complexes that arise during cell injury. The protein is Clusterin (CLU) of Equus caballus (Horse).